The chain runs to 184 residues: Photosystem I assembly protein Ycf4 (184 aa).

A run of 2 helical transmembrane segments spans residues 19 to 39 and 57 to 77; these read ISNF…LLVG and IIFF…LFIS.

It belongs to the Ycf4 family.

The protein resides in the plastid. The protein localises to the chloroplast thylakoid membrane. Seems to be required for the assembly of the photosystem I complex. The polypeptide is Photosystem I assembly protein Ycf4 (Solanum bulbocastanum (Wild potato)).